We begin with the raw amino-acid sequence, 282 residues long: NADPH-dependent 7-cyano-7-deazaguanine reductase (282 aa).

Position 88 to 90 (88 to 90 (IES)) interacts with substrate. 90–91 (SK) provides a ligand contact to NADPH. Cys190 functions as the Thioimide intermediate in the catalytic mechanism. Catalysis depends on Asp197, which acts as the Proton donor. Substrate is bound at residue 229-230 (HE). Residue 258 to 259 (RG) coordinates NADPH.

The protein belongs to the GTP cyclohydrolase I family. QueF type 2 subfamily. As to quaternary structure, homodimer.

It localises to the cytoplasm. It carries out the reaction 7-aminomethyl-7-carbaguanine + 2 NADP(+) = 7-cyano-7-deazaguanine + 2 NADPH + 3 H(+). The protein operates within tRNA modification; tRNA-queuosine biosynthesis. In terms of biological role, catalyzes the NADPH-dependent reduction of 7-cyano-7-deazaguanine (preQ0) to 7-aminomethyl-7-deazaguanine (preQ1). This chain is NADPH-dependent 7-cyano-7-deazaguanine reductase, found in Pectobacterium carotovorum subsp. carotovorum (strain PC1).